The sequence spans 240 residues: CRISPR-associated protein Cas5 3 (240 aa).

The protein belongs to the CRISPR-associated protein Cas5 family. Subtype I-A/Apern subfamily. As to quaternary structure, part of the aCascade ribonucleoprotein complex.

Functionally, CRISPR (clustered regularly interspaced short palindromic repeat) is an adaptive immune system that provides protection against mobile genetic elements (viruses, transposable elements and conjugative plasmids). CRISPR clusters contain spacers, sequences complementary to antecedent mobile elements, and target invading nucleic acids. CRISPR clusters are transcribed and processed into CRISPR RNA (crRNA). The protein is CRISPR-associated protein Cas5 3 (cas5c) of Saccharolobus solfataricus (strain ATCC 35092 / DSM 1617 / JCM 11322 / P2) (Sulfolobus solfataricus).